The following is a 341-amino-acid chain: tRNA N6-adenosine threonylcarbamoyltransferase (341 aa).

Positions 113 and 117 each coordinate Fe cation. Substrate-binding positions include 141–145 (LVSGG), aspartate 174, glycine 187, and asparagine 282. Position 310 (aspartate 310) interacts with Fe cation.

Belongs to the KAE1 / TsaD family. Fe(2+) is required as a cofactor.

The protein resides in the cytoplasm. The enzyme catalyses L-threonylcarbamoyladenylate + adenosine(37) in tRNA = N(6)-L-threonylcarbamoyladenosine(37) in tRNA + AMP + H(+). In terms of biological role, required for the formation of a threonylcarbamoyl group on adenosine at position 37 (t(6)A37) in tRNAs that read codons beginning with adenine. Is involved in the transfer of the threonylcarbamoyl moiety of threonylcarbamoyl-AMP (TC-AMP) to the N6 group of A37, together with TsaE and TsaB. TsaD likely plays a direct catalytic role in this reaction. This chain is tRNA N6-adenosine threonylcarbamoyltransferase, found in Porphyromonas gingivalis (strain ATCC BAA-308 / W83).